The primary structure comprises 326 residues: Putative ribose-phosphate pyrophosphokinase 2 (326 aa).

ATP contacts are provided by residues 43 to 45 (DGE) and 102 to 103 (RQ). Residue His-136 coordinates Mg(2+). Residues Asp-225 and 229-233 (NTGKT) each bind D-ribose 5-phosphate.

This sequence belongs to the ribose-phosphate pyrophosphokinase family. Class I subfamily. As to quaternary structure, homohexamer. Mg(2+) is required as a cofactor.

The protein localises to the cytoplasm. The catalysed reaction is D-ribose 5-phosphate + ATP = 5-phospho-alpha-D-ribose 1-diphosphate + AMP + H(+). It functions in the pathway metabolic intermediate biosynthesis; 5-phospho-alpha-D-ribose 1-diphosphate biosynthesis; 5-phospho-alpha-D-ribose 1-diphosphate from D-ribose 5-phosphate (route I): step 1/1. Involved in the biosynthesis of the central metabolite phospho-alpha-D-ribosyl-1-pyrophosphate (PRPP) via the transfer of pyrophosphoryl group from ATP to 1-hydroxyl of ribose-5-phosphate (Rib-5-P). The chain is Putative ribose-phosphate pyrophosphokinase 2 from Streptococcus pyogenes serotype M18 (strain MGAS8232).